Reading from the N-terminus, the 241-residue chain is Large ribosomal subunit protein bL25 (241 aa).

The interval 214 to 241 (LDAVKAGEEGSRAQQETEEASERADQGQ) is disordered.

Belongs to the bacterial ribosomal protein bL25 family. CTC subfamily. In terms of assembly, part of the 50S ribosomal subunit; part of the 5S rRNA/L5/L18/L25 subcomplex. Contacts the 5S rRNA. Binds to the 5S rRNA independently of L5 and L18.

This is one of the proteins that binds to the 5S RNA in the ribosome where it forms part of the central protuberance. The chain is Large ribosomal subunit protein bL25 from Deinococcus geothermalis (strain DSM 11300 / CIP 105573 / AG-3a).